We begin with the raw amino-acid sequence, 179 residues long: Large ribosomal subunit protein uL5 (179 aa).

This sequence belongs to the universal ribosomal protein uL5 family. Part of the 50S ribosomal subunit; part of the 5S rRNA/L5/L18/L25 subcomplex. Contacts the 5S rRNA and the P site tRNA. Forms a bridge to the 30S subunit in the 70S ribosome.

Functionally, this is one of the proteins that bind and probably mediate the attachment of the 5S RNA into the large ribosomal subunit, where it forms part of the central protuberance. In the 70S ribosome it contacts protein S13 of the 30S subunit (bridge B1b), connecting the 2 subunits; this bridge is implicated in subunit movement. Contacts the P site tRNA; the 5S rRNA and some of its associated proteins might help stabilize positioning of ribosome-bound tRNAs. The chain is Large ribosomal subunit protein uL5 from Bdellovibrio bacteriovorus (strain ATCC 15356 / DSM 50701 / NCIMB 9529 / HD100).